The following is a 286-amino-acid chain: Structural protein p32K (286 aa).

The propeptide at 1–12 is removed in mature form; it reads MYVTNNTALAGG. The interval 1–41 is disordered; the sequence is MYVTNNTALAGGAYRKRKKKFQRPKPRKRARKSKKPPKSEN. Over residues 14-36 the composition is skewed to basic residues; sequence YRKRKKKFQRPKPRKRARKSKKP.

Belongs to the atadenoviridae p32K protein family.

The protein resides in the virion. The protein is Structural protein p32K of Ovine adenovirus D serotype 7 (isolate OAV287) (OAdV-7).